Reading from the N-terminus, the 437-residue chain is MLSSSHLPTTIVTPKNVPTLGVLVGGGPAPGINGVIGAVTIEAINNGYRVLGFLEGFQNLILQDDSKIVELTIDSVSRIHFEGGSILKTSRANPTKKQEDLQKVVKQLQKFNVSLLVTIGGDDTAFSSMSVAKAANNEIHVVTLPKTIDNDLPLPYGIPTFGYETAREFGANVVRNLMTDASTASRYFIVVAMGRQAGHLALGIGKSAGSHLTLIPEEFLPTTDSTEPEVTFSRICDMIEASIIKRLYTSKKDHGVIVLAEGLLEYMSTDELKQAFGSSLKYDAHDHIMLAELDFGRLVRDEMRERMNRRGLKIAFTEKNLGYELRCAPPNAFDREYTRDLGNGAVRYLLNGGNGALITVQGVKMVPLSFDDLKDPRTGKTRTRQVDVSSEGFQVAKRYMIRLEKKDFEKEETLKGLAATAKCSVEDFIKQFKYLVQ.

Glycine 27 is a diphosphate binding site. Aspartate 122 lines the Mg(2+) pocket. Substrate is bound by residues 147–149 (TID), 193–195 (MGR), glutamate 261, and 323–326 (YELR). Catalysis depends on aspartate 149, which acts as the Proton acceptor.

The protein belongs to the phosphofructokinase type A (PFKA) family. PPi-dependent PFK group II subfamily. Clade 'Short' sub-subfamily. As to quaternary structure, homotetramer. It depends on Mg(2+) as a cofactor. Mn(2+) is required as a cofactor.

Its subcellular location is the cytoplasm. It carries out the reaction beta-D-fructose 6-phosphate + diphosphate = beta-D-fructose 1,6-bisphosphate + phosphate + H(+). It participates in carbohydrate degradation; glycolysis; D-glyceraldehyde 3-phosphate and glycerone phosphate from D-glucose: step 3/4. With respect to regulation, activated by AMP. Probably promotes oligomerization of the enzyme. Catalyzes the phosphorylation of D-fructose 6-phosphate, the first committing step of glycolysis. Uses inorganic phosphate (PPi) as phosphoryl donor instead of ATP like common ATP-dependent phosphofructokinases (ATP-PFKs), which renders the reaction reversible, and can thus function both in glycolysis and gluconeogenesis. Consistently, PPi-PFK can replace the enzymes of both the forward (ATP-PFK) and reverse (fructose-bisphosphatase (FBPase)) reactions. In Naegleria fowleri (Brain eating amoeba), this protein is Pyrophosphate--fructose 6-phosphate 1-phosphotransferase.